The chain runs to 290 residues: Membrane protein insertase YidC (290 aa).

Positions 1-19 are cleaved as a signal peptide; it reads MKKKTLLPLFLGIMVFLAG. A lipid anchor (N-palmitoyl cysteine) is attached at Cys-20. The S-diacylglycerol cysteine moiety is linked to residue Cys-20. 5 consecutive transmembrane segments (helical) span residues 56 to 76, 134 to 154, 176 to 196, 207 to 224, and 229 to 251; these read YGLAIIILVLVIRIILLPFML, MLGCLPMLIQLPIIMGLYFVL, PDIWITIIAGVLYFIQAYVSS, GYMMMVISPIMIIWISLS, and LGLYWSVSAAFLVVQTHFANIYY. A disordered region spans residues 270–290; that stretch reads HNGGSNKKGKNTQVVSKKKKK.

Belongs to the OXA1/ALB3/YidC family. Type 2 subfamily.

It localises to the cell membrane. Required for the insertion and/or proper folding and/or complex formation of integral membrane proteins into the membrane. Involved in integration of membrane proteins that insert both dependently and independently of the Sec translocase complex, as well as at least some lipoproteins. The sequence is that of Membrane protein insertase YidC from Staphylococcus aureus (strain MRSA252).